Reading from the N-terminus, the 142-residue chain is MVLSAADKTNVKGVFSKIGGHAEEYGAETLERMFIAYPQTKTYFPHFDLQHGSAQIKAHGKKVAAALVEAVNHIDDIAGALSKLSDLHAQKLRVDPVNFKFLGHCFLVVVAIHHPAALTPEVHASLDKFMCAVGAVLTAKYR.

The Globin domain occupies 2–142; that stretch reads VLSAADKTNV…VGAVLTAKYR (141 aa). Position 59 (H59) interacts with O2. H88 lines the heme b pocket.

This sequence belongs to the globin family. As to quaternary structure, heterotetramer of two alpha chains and two beta chains. Red blood cells.

Its function is as follows. Involved in oxygen transport from the lung to the various peripheral tissues. In Cairina moschata (Muscovy duck), this protein is Hemoglobin subunit alpha-A (HBAA).